The primary structure comprises 483 residues: Cobyric acid synthase (483 aa).

The GATase cobBQ-type domain maps to 251 to 438 (ALIVAVPMLP…LHGIFSADRF (188 aa)). Cysteine 333 serves as the catalytic Nucleophile. Histidine 430 is a catalytic residue.

This sequence belongs to the CobB/CobQ family. CobQ subfamily.

Its pathway is cofactor biosynthesis; adenosylcobalamin biosynthesis. Its function is as follows. Catalyzes amidations at positions B, D, E, and G on adenosylcobyrinic A,C-diamide. NH(2) groups are provided by glutamine, and one molecule of ATP is hydrogenolyzed for each amidation. The polypeptide is Cobyric acid synthase (Brucella abortus (strain S19)).